The primary structure comprises 91 residues: UPF0250 protein Psyr_4360 (91 aa).

Belongs to the UPF0250 family.

This is UPF0250 protein Psyr_4360 from Pseudomonas syringae pv. syringae (strain B728a).